The sequence spans 321 residues: L-carnitine dehydrogenase (321 aa).

Position 14–19 (14–19 (GSGVIG)) interacts with NAD(+). Residues 317–321 (MTFSE) form an important for catalytic activity region.

The protein belongs to the 3-hydroxyacyl-CoA dehydrogenase family. L-carnitine dehydrogenase subfamily. In terms of assembly, homodimer.

The protein localises to the cytoplasm. The catalysed reaction is carnitine + NAD(+) = 3-dehydrocarnitine + NADH + H(+). It functions in the pathway amine and polyamine metabolism; carnitine metabolism. The enzyme activity is strongly inhibited by Ag(+), Ni(+), Hg(+), and p-chloromercuribenzoate, and partially inhibited by Li(+), Ca(2+), Mn(2+), Co(2+), Cu(2+), and Zn(2+). Catalyzes the NAD(+)-dependent oxidation of L-carnitine to 3-dehydrocarnitine. Is specific for L-carnitine and NAD(+) as substrates since D-carnitine, other carnitine analogs such as choline and betaine, and NADP(+) are not substrates. Despite a high similarity to 3-hydroxyacyl-CoA dehydrogenases, cannot dehydrogenate 3-hydroxybutylate and 3-hydroxybutyl-CoA. Is probably involved in a L-carnitine degradation pathway that allows Pseudomonas sp. strain NBRC 13558 to grow on L-carnitine as the sole source of carbon and nitrogen. This chain is L-carnitine dehydrogenase, found in Pseudomonas sp.